Reading from the N-terminus, the 155-residue chain is Ribosomal RNA large subunit methyltransferase H (155 aa).

S-adenosyl-L-methionine-binding positions include Leu72, Gly103, and 122-127; that span reads LSDLTL.

It belongs to the RNA methyltransferase RlmH family. Homodimer.

Its subcellular location is the cytoplasm. It carries out the reaction pseudouridine(1915) in 23S rRNA + S-adenosyl-L-methionine = N(3)-methylpseudouridine(1915) in 23S rRNA + S-adenosyl-L-homocysteine + H(+). Its function is as follows. Specifically methylates the pseudouridine at position 1915 (m3Psi1915) in 23S rRNA. This chain is Ribosomal RNA large subunit methyltransferase H, found in Verminephrobacter eiseniae (strain EF01-2).